The sequence spans 495 residues: F(420)H(2) dehydrogenase subunit M (495 aa).

A run of 15 helical transmembrane segments spans residues 1–21 (MLPV…VTFF), 27–47 (LAAG…LYAY), 57–77 (MQFY…SVGI), 80–100 (VSMP…LFTW), 108–128 (NRFY…FVAL), 130–150 (FVVF…IVNL), 163–183 (FFIY…GLFY), 215–235 (IFLA…FHSW), 249–269 (ILFI…LPML), 277–297 (LMIM…ALLA), 315–335 (MGYV…GAMF), 338–358 (FSHG…QTAA), 378–398 (VAMM…GFIA), 412–432 (VFVV…LWAM), and 450–470 (INSI…YFGL).

The protein belongs to the complex I subunit 4 family. As to quaternary structure, the FPO complex is composed of at least 13 different subunits. FpoA, FpoH, FpoJ, FpoK, FpoL, FpoM and FpoN proteins constitute the membrane sector of the complex.

Its subcellular location is the cell membrane. It catalyses the reaction methanophenazine + reduced coenzyme F420-(gamma-L-Glu)(n) = dihydromethanophenazine + oxidized coenzyme F420-(gamma-L-Glu)(n) + H(+). Component of the F(420)H(2) dehydrogenase (FPO complex) which is part of the energy-conserving F(420)H(2):heterodisulfide oxidoreductase system. The membrane-bound electron transfer system of the complex plays an important role in the metabolism of methylotrophic methanogens when the organisms grow on methanol or methylamines. Catalyzes the oxidation of methanophenazine to dihydromethanophenazine. It shuttles electrons from F(420)H(2), via FAD and iron-sulfur (Fe-S) centers, to methanophenazine (an electron carrier in the membrane). It couples the redox reaction to proton translocation (for every two electrons transferred, two hydrogen ions are translocated across the cytoplasmic membrane), and thus conserves the redox energy in a proton gradient. It also catalyzes the oxidation of F(420)H(2) with quinones such as 2,3-dimethyl-1,4-naphthoquinone, 2-methyl-1,4-naphthoquinone and tetramethyl-p-benzoquinone. This is F(420)H(2) dehydrogenase subunit M (fpoM) from Methanosarcina mazei (strain ATCC BAA-159 / DSM 3647 / Goe1 / Go1 / JCM 11833 / OCM 88) (Methanosarcina frisia).